The sequence spans 419 residues: uncharacterized protein (419 aa).

Helical transmembrane passes span 16–36 (IMAKSFIISTVITVLLVLVVT), 186–206 (LVYIMLFVIYFSVIMYASMIA), 235–255 (LLGIGLVGITQLAIIIGAGSL), 283–303 (VIYAVIFFLLGYFLYATLAAF), 318–338 (ITPMTLLVVAGFMIAMFGLNA), 340–360 (DAGFITVTSFIPFFTPMIMFL), and 369–389 (FWQAAVGIGITLLTIVILAVI).

To M.jannaschii MJ1024.

It localises to the cell membrane. This is an uncharacterized protein from Bacillus subtilis (strain 168).